Reading from the N-terminus, the 143-residue chain is uncharacterized protein (143 aa).

The Rhodanese domain maps to 50-143; it reads NKEDAVVVDL…GENLPLVRGK (94 aa). K91 carries the N6-acetyllysine modification.

This is an uncharacterized protein from Escherichia coli O6:H1 (strain CFT073 / ATCC 700928 / UPEC).